A 513-amino-acid chain; its full sequence is ATP synthase subunit alpha (513 aa).

169-176 (GDRQTGKT) contributes to the ATP binding site.

It belongs to the ATPase alpha/beta chains family. F-type ATPases have 2 components, CF(1) - the catalytic core - and CF(0) - the membrane proton channel. CF(1) has five subunits: alpha(3), beta(3), gamma(1), delta(1), epsilon(1). CF(0) has three main subunits: a(1), b(2) and c(9-12). The alpha and beta chains form an alternating ring which encloses part of the gamma chain. CF(1) is attached to CF(0) by a central stalk formed by the gamma and epsilon chains, while a peripheral stalk is formed by the delta and b chains.

Its subcellular location is the cell inner membrane. The catalysed reaction is ATP + H2O + 4 H(+)(in) = ADP + phosphate + 5 H(+)(out). In terms of biological role, produces ATP from ADP in the presence of a proton gradient across the membrane. The alpha chain is a regulatory subunit. The protein is ATP synthase subunit alpha of Klebsiella pneumoniae subsp. pneumoniae (strain ATCC 700721 / MGH 78578).